The primary structure comprises 93 residues: uncharacterized protein (93 aa).

The signal sequence occupies residues 1–22 (MSIPNLSSVTQLLSIATGLVST). N-linked (GlcNAc...) asparagine; by host glycosylation occurs at asparagine 5.

This is an uncharacterized protein from Invertebrate iridescent virus 6 (IIV-6).